Consider the following 757-residue polypeptide: Elongation factor G, mitochondrial (757 aa).

The transit peptide at 1 to 39 (MLLVPRVPVVMQGKCGLLKISRPLQGSLSRGFHFSRAHR) directs the protein to the mitochondrion. The tr-type G domain maps to 65-346 (QKLRNIGISA…AIVDYLPNPS (282 aa)). GTP-binding positions include 74 to 81 (AHIDSGKT), 145 to 149 (DTPGH), and 199 to 202 (NKMD).

It belongs to the TRAFAC class translation factor GTPase superfamily. Classic translation factor GTPase family. EF-G/EF-2 subfamily.

The protein resides in the mitochondrion. It participates in protein biosynthesis; polypeptide chain elongation. In terms of biological role, mitochondrial GTPase that catalyzes the GTP-dependent ribosomal translocation step during translation elongation. During this step, the ribosome changes from the pre-translocational (PRE) to the post-translocational (POST) state as the newly formed A-site-bound peptidyl-tRNA and P-site-bound deacylated tRNA move to the P and E sites, respectively. Catalyzes the coordinated movement of the two tRNA molecules, the mRNA and conformational changes in the ribosome. In Candida glabrata (strain ATCC 2001 / BCRC 20586 / JCM 3761 / NBRC 0622 / NRRL Y-65 / CBS 138) (Yeast), this protein is Elongation factor G, mitochondrial.